We begin with the raw amino-acid sequence, 241 residues long: Cobalt transport protein CbiM (241 aa).

A signal peptide spans 1 to 23 (MKKNLTFFMVIALLFTITPNVYA). Helical transmembrane passes span 29–49 (GFLP…FIII), 66–86 (MLLG…IPSV), 98–118 (LSAI…VLIF), 121–141 (ILLA…MGIM), 160–180 (VAVF…TSVQ), and 202–222 (IFSI…VIIF).

It belongs to the CbiM family. In terms of assembly, forms an energy-coupling factor (ECF) transporter complex composed of an ATP-binding protein (A component, CbiO), a transmembrane protein (T component, CbiQ) and 2 possible substrate-capture proteins (S components, CbiM and CbiN) of unknown stoichimetry.

The protein localises to the cell membrane. It participates in cofactor biosynthesis; adenosylcobalamin biosynthesis. In terms of biological role, part of the energy-coupling factor (ECF) transporter complex CbiMNOQ involved in cobalt import. The polypeptide is Cobalt transport protein CbiM (Clostridium tetani (strain Massachusetts / E88)).